The sequence spans 268 residues: Tryptophan synthase alpha chain (268 aa).

Residues glutamate 49 and aspartate 60 each act as proton acceptor in the active site.

This sequence belongs to the TrpA family. As to quaternary structure, tetramer of two alpha and two beta chains.

The catalysed reaction is (1S,2R)-1-C-(indol-3-yl)glycerol 3-phosphate + L-serine = D-glyceraldehyde 3-phosphate + L-tryptophan + H2O. It functions in the pathway amino-acid biosynthesis; L-tryptophan biosynthesis; L-tryptophan from chorismate: step 5/5. In terms of biological role, the alpha subunit is responsible for the aldol cleavage of indoleglycerol phosphate to indole and glyceraldehyde 3-phosphate. The polypeptide is Tryptophan synthase alpha chain (Vibrio cholerae serotype O1 (strain ATCC 39541 / Classical Ogawa 395 / O395)).